We begin with the raw amino-acid sequence, 429 residues long: Ribosomal RNA small subunit methyltransferase B (429 aa).

S-adenosyl-L-methionine-binding positions include 254–260, Asp-277, Asp-303, and Asp-322; that span reads CSAPGGK. The active-site Nucleophile is the Cys-375. Positions 397-419 are disordered; it reads ALSETGTPDQPGQQNLPGGEEGD. The span at 400-412 shows a compositional bias: polar residues; it reads ETGTPDQPGQQNL.

This sequence belongs to the class I-like SAM-binding methyltransferase superfamily. RsmB/NOP family.

The protein localises to the cytoplasm. The enzyme catalyses cytidine(967) in 16S rRNA + S-adenosyl-L-methionine = 5-methylcytidine(967) in 16S rRNA + S-adenosyl-L-homocysteine + H(+). Functionally, specifically methylates the cytosine at position 967 (m5C967) of 16S rRNA. This is Ribosomal RNA small subunit methyltransferase B from Salmonella dublin (strain CT_02021853).